The primary structure comprises 561 residues: DNA ligase B (561 aa).

Lys125 serves as the catalytic N6-AMP-lysine intermediate.

This sequence belongs to the NAD-dependent DNA ligase family. LigB subfamily.

It catalyses the reaction NAD(+) + (deoxyribonucleotide)n-3'-hydroxyl + 5'-phospho-(deoxyribonucleotide)m = (deoxyribonucleotide)n+m + AMP + beta-nicotinamide D-nucleotide.. In terms of biological role, catalyzes the formation of phosphodiester linkages between 5'-phosphoryl and 3'-hydroxyl groups in double-stranded DNA using NAD as a coenzyme and as the energy source for the reaction. This Salmonella schwarzengrund (strain CVM19633) protein is DNA ligase B.